We begin with the raw amino-acid sequence, 200 residues long: Ciliary neurotrophic factor (200 aa).

It belongs to the CNTF family. Nervous system.

It is found in the cytoplasm. Its function is as follows. CNTF is a survival factor for various neuronal cell types. Seems to prevent the degeneration of motor axons after axotomy. The sequence is that of Ciliary neurotrophic factor (Cntf) from Rattus norvegicus (Rat).